The primary structure comprises 444 residues: Phosphoribosylamine--glycine ligase (444 aa).

An ATP-grasp domain is found at Arg-109 to Asn-324. Position 140 to 202 (Leu-140 to Thr-202) interacts with ATP. The Mg(2+) site is built by Gln-282, Glu-294, and Asn-296. Positions 282, 294, and 296 each coordinate Mn(2+).

Belongs to the GARS family. The cofactor is Mg(2+). Mn(2+) serves as cofactor.

The enzyme catalyses 5-phospho-beta-D-ribosylamine + glycine + ATP = N(1)-(5-phospho-beta-D-ribosyl)glycinamide + ADP + phosphate + H(+). It participates in purine metabolism; IMP biosynthesis via de novo pathway; N(1)-(5-phospho-D-ribosyl)glycinamide from 5-phospho-alpha-D-ribose 1-diphosphate: step 2/2. In Methanocaldococcus jannaschii (strain ATCC 43067 / DSM 2661 / JAL-1 / JCM 10045 / NBRC 100440) (Methanococcus jannaschii), this protein is Phosphoribosylamine--glycine ligase.